The chain runs to 92 residues: Small ribosomal subunit protein uS19c (92 aa).

It belongs to the universal ribosomal protein uS19 family.

The protein localises to the plastid. The protein resides in the chloroplast. Its function is as follows. Protein S19 forms a complex with S13 that binds strongly to the 16S ribosomal RNA. This is Small ribosomal subunit protein uS19c from Pinus koraiensis (Korean pine).